The chain runs to 537 residues: MSLIPKPISKVSTFTFILLILLSFTIIIAYSSPDSNVESNEPGFDSDLDQLLAVDEQLQEDRPEQQSEAETVSKAQRIVLELNGDYTKRVIDGNEFVMVLGYAPWCARSAELMPRFAEAATALKEIGSSVLMAKIDGDRYSKIASELEIKGFPTLLLFVNGTSLTYNGGSSAEDIVIWVQKKTGAPIITLNTVDEAPRFLDKYHTFVLGLFEKFEGSEHNEFVKAAKSDDEIQFIETRDSDVAKLLFPDLKSNNVFIGLVKPEAERYTVYDGSYKMEKILEFLGSNKFPLFTKLTETNTVWVYSSPVKLQVMLFSKADDFQKLAQPLEDIARKFKSKLMFIYVDITNENLAMPFLILFGIEAGNKTVVAAFDNNLNSKYLLESDPSPNSIEEFCSGLAHGTVSRYYRSEPVPDNENASIVTVVGKTFDGLVLNSRENVLLEVHTPWCVNCEALSKQIEKLAKHFKGFENLVFARIDASANEHTKLQVDDKYPIILLYKSGEKEKPLKLSTKLSAKDIAVFINEELLKPKNGSAKDEL.

The first 29 residues, Met-1–Ala-29, serve as a signal peptide directing secretion. In terms of domain architecture, Thioredoxin 1 spans Leu-58–Gly-184. Cys-106 functions as the Nucleophile in the catalytic mechanism. Residues Asn-160, Asn-364, and Asn-416 are each glycosylated (N-linked (GlcNAc...) asparagine). Residues Leu-380 to Leu-526 enclose the Thioredoxin 2 domain. Residues Cys-447 and Cys-450 each act as nucleophile in the active site. Cys-447 and Cys-450 form a disulfide bridge. The N-linked (GlcNAc...) asparagine glycan is linked to Asn-530. Positions Lys-534 to Leu-537 match the Prevents secretion from ER motif.

This sequence belongs to the protein disulfide isomerase family. As to expression, widely expressed.

The protein localises to the endoplasmic reticulum lumen. The catalysed reaction is Catalyzes the rearrangement of -S-S- bonds in proteins.. Its function is as follows. Acts as a protein-folding catalyst that interacts with nascent polypeptides to catalyze the formation, isomerization, and reduction or oxidation of disulfide bonds. The sequence is that of Protein disulfide isomerase-like 1-5 (PDIL1-5) from Arabidopsis thaliana (Mouse-ear cress).